Reading from the N-terminus, the 366-residue chain is Histidinol-phosphate aminotransferase (366 aa).

Lys228 is modified (N6-(pyridoxal phosphate)lysine).

It belongs to the class-II pyridoxal-phosphate-dependent aminotransferase family. Histidinol-phosphate aminotransferase subfamily. As to quaternary structure, homodimer. It depends on pyridoxal 5'-phosphate as a cofactor.

It carries out the reaction L-histidinol phosphate + 2-oxoglutarate = 3-(imidazol-4-yl)-2-oxopropyl phosphate + L-glutamate. The protein operates within amino-acid biosynthesis; L-histidine biosynthesis; L-histidine from 5-phospho-alpha-D-ribose 1-diphosphate: step 7/9. The polypeptide is Histidinol-phosphate aminotransferase (Campylobacter fetus subsp. fetus (strain 82-40)).